The chain runs to 404 residues: MREAPHVLGIVLAGGEGKRLYPLTADRAKPAVPFGGGYRLIDFVLSNLVNARFLRICVLTQYKSHSLDRHISQNWRLSGLAGEYITPVPAQQRLGPRWYTGSADAIYQSMNLIYDEDPDYIVIFGADHVYRMDPEQMVQQHIESGAGATVAGIRVPRSEASAFGCIDADDSGRIRGWVEKPADPPGTPDDPEMTFASMGNYIFTTKVLIDAIRADAEDDDSDHDMGGDIIPRLVADGMASVYDFNNNEVPGATERDHGYWRDVGTLDAFYDAHMDLVSVHPIFNLYNKRWPIRGGAENLAPAKFVNGGSAQESVVGAGSIISAASVRNSVLSSNVAIDDGAIVEGSVIMPGVRIGRGAVVRHAILDKNVVVGPGEMVGVDLDKDRERFTVSAGGVVAVGKGVWI.

Alpha-D-glucose 1-phosphate-binding positions include Tyr99, Gly164, 179–180, and Ser197; that span reads EK.

Belongs to the bacterial/plant glucose-1-phosphate adenylyltransferase family.

It carries out the reaction alpha-D-glucose 1-phosphate + ATP + H(+) = ADP-alpha-D-glucose + diphosphate. Its pathway is glycan biosynthesis; glycogen biosynthesis. Its function is as follows. Involved in the biosynthesis of ADP-glucose, a building block, required in the biosynthesis of maltose-1-phosphate (M1P) and in the elongation reactions to produce linear alpha-1,4-glucans. Catalyzes the reaction between ATP and alpha-D-glucose 1-phosphate (G1P) to produce pyrophosphate and ADP-Glc. The protein is Glucose-1-phosphate adenylyltransferase of Mycolicibacterium gilvum (strain PYR-GCK) (Mycobacterium gilvum (strain PYR-GCK)).